Here is a 549-residue protein sequence, read N- to C-terminus: Frizzled-7-A (549 aa).

The signal sequence occupies residues 1–22; the sequence is MSSTVSLLFCCLFLQLCPSAQQ. Residues 23 to 231 lie on the Extracellular side of the membrane; it reads YHGEKGISVP…EEEVRFARLW (209 aa). Residues 32-151 form the FZ domain; the sequence is PDHGFCQPIS…HGAGEICVGQ (120 aa). 5 disulfide bridges follow: Cys37–Cys98, Cys45–Cys91, Cys82–Cys119, Cys108–Cys148, and Cys112–Cys136. Asn51 carries an N-linked (GlcNAc...) asparagine glycan. Residue Asn152 is glycosylated (N-linked (GlcNAc...) asparagine). The chain crosses the membrane as a helical span at residues 232-252; the sequence is VGIWAILCCISTLFTVLTYLV. Topologically, residues 253–263 are cytoplasmic; the sequence is DMRRFSYPERP. The helical transmembrane segment at 264–284 threads the bilayer; it reads IIFLSGCYFMVAVAYTAGFLL. The Extracellular portion of the chain corresponds to 285 to 311; it reads EERAVCVERFSEDSYRTVAQGTKKEGC. A helical transmembrane segment spans residues 312 to 332; it reads TILFMILYFFGMASSIWWVIL. The Cytoplasmic portion of the chain corresponds to 333-354; it reads SLTWFLSAGMKWGHEAIEANSQ. The helical transmembrane segment at 355-375 threads the bilayer; sequence YFHLAAWAVPAVKTITILAMG. Residues 376-398 lie on the Extracellular side of the membrane; the sequence is QVDGDVLSGVCYVGINSVDSLRG. The helical transmembrane segment at 399–419 threads the bilayer; sequence FVLAPLFVYLFIGTSFLLAGF. Over 420 to 445 the chain is Cytoplasmic; it reads VSLFRIRTIMKHDGTKTEKLEKLMVR. Residues 446–466 traverse the membrane as a helical segment; sequence IGVFSVMYTVPATIVLACYFY. At 467–503 the chain is on the extracellular side; it reads EQAFRDTWEKTWLVQTCKGYAVPCPNYNFAPMSPDFT. The helical transmembrane segment at 504-524 threads the bilayer; the sequence is VFMIKYLMTMIVGITSSFWIW. Residues 525 to 549 lie on the Cytoplasmic side of the membrane; that stretch reads SGKTLQSWRRFYHRLSNGSKGETAV. The Lys-Thr-X-X-X-Trp motif, mediates interaction with the PDZ domain of Dvl family members motif lies at 527–532; sequence KTLQSW. Residues 547-549 carry the PDZ-binding motif; it reads TAV.

It belongs to the G-protein coupled receptor Fz/Smo family. In terms of assembly, interacts with wnt11 and sdc4. The extracellular domain interacts with the extracellular domain of pcdh8/papc. As to expression, expressed in the animal region of cleavage stage embryos. During gastrulation, broadly expressed on the dorsal side of the embryo in deep mesodermal cells surrounding the blastopore lip and in presumptive anterior neuroectoderm. During neurulation, becomes progressively more restricted to the dorsal epidermis, neural plate, and neural tube. Expressed in the cranial neural crest of neurulae and tailbud embryos as well as the pronephros of tailbud embryos. Localized to the brain of neurulae, tailbud embryos and tadpoles. In tadpoles, strongly expressed in the eye and developing heart.

Its subcellular location is the cell membrane. It localises to the endosome membrane. Receptor for Wnt proteins. Acts in both canonical and non-canonical Wnt pathways. Although different papers report differing Wnt preferences, wnt5a, wnt8b and wnt11 have been proposed as synergists. In the canonical Wnt pathway, acts via beta-catenin to promote the expression of the dorsal genes siamois, twin and nodal3 and to establish the dorsal axis of the embryo and induce dorsal mesoderm formation. In a non-canonical Wnt/planar cell polarity (PCP) pathway, acts with sdc4 and dvl2/dsh to regulate convergent extension cell movements during gastrulation. Triggers phosphorylation of dvl2/dsh and its translocation to the plasma membrane. In a third branch of Wnt signaling, acts in a non-canonical pathway via trimeric G proteins, and independently of dvl2/dsh, to recruit protein kinase C (PKC) to the membrane and thus activate PKC. PKC signaling controls cell sorting and tissue separation during gastrulation. In Xenopus laevis (African clawed frog), this protein is Frizzled-7-A (fzd7-a).